A 203-amino-acid chain; its full sequence is ATP-dependent Clp protease proteolytic subunit (203 aa).

The active-site Nucleophile is the serine 101. Histidine 126 is an active-site residue.

This sequence belongs to the peptidase S14 family. As to quaternary structure, component of the chloroplastic Clp protease core complex.

Its subcellular location is the plastid. It localises to the chloroplast stroma. It carries out the reaction Hydrolysis of proteins to small peptides in the presence of ATP and magnesium. alpha-casein is the usual test substrate. In the absence of ATP, only oligopeptides shorter than five residues are hydrolyzed (such as succinyl-Leu-Tyr-|-NHMec, and Leu-Tyr-Leu-|-Tyr-Trp, in which cleavage of the -Tyr-|-Leu- and -Tyr-|-Trp bonds also occurs).. Functionally, cleaves peptides in various proteins in a process that requires ATP hydrolysis. Has a chymotrypsin-like activity. Plays a major role in the degradation of misfolded proteins. The polypeptide is ATP-dependent Clp protease proteolytic subunit (Marchantia polymorpha (Common liverwort)).